A 259-amino-acid polypeptide reads, in one-letter code: Leucine-rich repeat-containing protein 61 (259 aa).

LRR repeat units follow at residues S32 to L53, G54 to R75, Q76 to E97, and N98 to A119. The LRRCT domain maps to N138–D178.

This chain is Leucine-rich repeat-containing protein 61 (LRRC61), found in Homo sapiens (Human).